The sequence spans 155 residues: Small ribosomal subunit protein uS7c (155 aa).

It belongs to the universal ribosomal protein uS7 family. Part of the 30S ribosomal subunit.

The protein resides in the plastid. It is found in the chloroplast. Functionally, one of the primary rRNA binding proteins, it binds directly to 16S rRNA where it nucleates assembly of the head domain of the 30S subunit. This chain is Small ribosomal subunit protein uS7c (rps7), found in Metasequoia glyptostroboides (Dawn redwood).